Reading from the N-terminus, the 299-residue chain is Putative peptidyl-prolyl cis-trans isomerase HP_0175 (299 aa).

The signal sequence occupies residues 1-21; it reads MKKNILNLALVGALSTSFLMA. A PpiC domain is found at 154–253; that stretch reads KQEAHARHIL…FGYHIIYLIS (100 aa).

The enzyme catalyses [protein]-peptidylproline (omega=180) = [protein]-peptidylproline (omega=0). This chain is Putative peptidyl-prolyl cis-trans isomerase HP_0175, found in Helicobacter pylori (strain ATCC 700392 / 26695) (Campylobacter pylori).